The following is a 195-amino-acid chain: Large ribosomal subunit protein bL17 (195 aa).

A disordered region spans residues 125-195 (ANRARRVGAS…PTQDSDADKS (71 aa)). Residues 136–152 (QTAPVAAAAAPQAAVEP) show a composition bias toward low complexity. Composition is skewed to acidic residues over residues 153–173 (EATE…EDTT) and 183–195 (TDDP…ADKS).

It belongs to the bacterial ribosomal protein bL17 family. Part of the 50S ribosomal subunit. Contacts protein L32.

This Mycobacterium sp. (strain JLS) protein is Large ribosomal subunit protein bL17.